We begin with the raw amino-acid sequence, 355 residues long: Uroporphyrinogen decarboxylase (355 aa).

Substrate-binding positions include 27 to 31 (RQAGR), Phe46, Asp77, Tyr154, Thr209, and His328.

This sequence belongs to the uroporphyrinogen decarboxylase family. As to quaternary structure, homodimer.

It localises to the cytoplasm. The enzyme catalyses uroporphyrinogen III + 4 H(+) = coproporphyrinogen III + 4 CO2. The protein operates within porphyrin-containing compound metabolism; protoporphyrin-IX biosynthesis; coproporphyrinogen-III from 5-aminolevulinate: step 4/4. Catalyzes the decarboxylation of four acetate groups of uroporphyrinogen-III to yield coproporphyrinogen-III. The protein is Uroporphyrinogen decarboxylase of Vibrio vulnificus (strain CMCP6).